Reading from the N-terminus, the 141-residue chain is uncharacterized protein (141 aa).

This is an uncharacterized protein from Schizosaccharomyces pombe (strain 972 / ATCC 24843) (Fission yeast).